The sequence spans 248 residues: Coenzyme F420:L-glutamate ligase (248 aa).

GTP-binding positions include 15–18, 45–46, and Lys50; these read IPLI and ET. Residue Asp115 coordinates a divalent metal cation. Residue Asn118 coordinates GTP. A divalent metal cation-binding residues include Asp155, Ser156, and Gln213. 211 to 218 lines the GTP pocket; that stretch reads MGQSNEGI.

Belongs to the CofE family. As to quaternary structure, homodimer. Mg(2+) serves as cofactor. It depends on Mn(2+) as a cofactor. Requires K(+) as cofactor.

It carries out the reaction oxidized coenzyme F420-0 + GTP + L-glutamate = oxidized coenzyme F420-1 + GDP + phosphate + H(+). It catalyses the reaction oxidized coenzyme F420-1 + GTP + L-glutamate = oxidized coenzyme F420-2 + GDP + phosphate + H(+). Its pathway is cofactor biosynthesis; coenzyme F420 biosynthesis. Catalyzes the GTP-dependent successive addition of two or more gamma-linked L-glutamates to the L-lactyl phosphodiester of 7,8-didemethyl-8-hydroxy-5-deazariboflavin (F420-0) to form coenzyme F420-0-glutamyl-glutamate (F420-2) or polyglutamated F420 derivatives. In Methanococcus maripaludis (strain DSM 14266 / JCM 13030 / NBRC 101832 / S2 / LL), this protein is Coenzyme F420:L-glutamate ligase.